The following is a 613-amino-acid chain: Dihydroxy-acid dehydratase (613 aa).

Residue Asp-81 coordinates Mg(2+). Residue Cys-122 coordinates [2Fe-2S] cluster. The Mg(2+) site is built by Asp-123 and Lys-124. Residue Lys-124 is modified to N6-carboxylysine. Cys-195 serves as a coordination point for [2Fe-2S] cluster. Glu-491 is a binding site for Mg(2+). Ser-517 serves as the catalytic Proton acceptor.

Belongs to the IlvD/Edd family. Homodimer. It depends on [2Fe-2S] cluster as a cofactor. Mg(2+) is required as a cofactor.

It catalyses the reaction (2R)-2,3-dihydroxy-3-methylbutanoate = 3-methyl-2-oxobutanoate + H2O. The enzyme catalyses (2R,3R)-2,3-dihydroxy-3-methylpentanoate = (S)-3-methyl-2-oxopentanoate + H2O. The protein operates within amino-acid biosynthesis; L-isoleucine biosynthesis; L-isoleucine from 2-oxobutanoate: step 3/4. It functions in the pathway amino-acid biosynthesis; L-valine biosynthesis; L-valine from pyruvate: step 3/4. In terms of biological role, functions in the biosynthesis of branched-chain amino acids. Catalyzes the dehydration of (2R,3R)-2,3-dihydroxy-3-methylpentanoate (2,3-dihydroxy-3-methylvalerate) into 2-oxo-3-methylpentanoate (2-oxo-3-methylvalerate) and of (2R)-2,3-dihydroxy-3-methylbutanoate (2,3-dihydroxyisovalerate) into 2-oxo-3-methylbutanoate (2-oxoisovalerate), the penultimate precursor to L-isoleucine and L-valine, respectively. The protein is Dihydroxy-acid dehydratase of Nitrobacter hamburgensis (strain DSM 10229 / NCIMB 13809 / X14).